The sequence spans 116 residues: Large ribosomal subunit protein uL18 (116 aa).

It belongs to the universal ribosomal protein uL18 family. As to quaternary structure, part of the 50S ribosomal subunit; part of the 5S rRNA/L5/L18/L25 subcomplex. Contacts the 5S and 23S rRNAs.

Functionally, this is one of the proteins that bind and probably mediate the attachment of the 5S RNA into the large ribosomal subunit, where it forms part of the central protuberance. The protein is Large ribosomal subunit protein uL18 of Shewanella sp. (strain ANA-3).